We begin with the raw amino-acid sequence, 619 residues long: Nuclear hormone receptor family member nhr-6 (619 aa).

Positions 1–18 (MEQLSIQTDELQDQFSNC) are enriched in polar residues. Disordered regions lie at residues 1–29 (MEQLSIQTDELQDQFSNCSPASVDSSYSS), 58–86 (MSKNSSCSSSFDYGEFGPSSSSRKGSKTT), 103–134 (QVNTVPKPTKTEVESIPEEFEQKPSSSSHRLP), and 196–232 (QHFPVSDSRRGSQGTTSSSNNTGGTPSPHSSSLPTSP). The segment covering 19 to 29 (SPASVDSSYSS) has biased composition (low complexity). Residues 125-134 (KPSSSSHRLP) show a composition bias toward polar residues. The span at 206-232 (GSQGTTSSSNNTGGTPSPHSSSLPTSP) shows a compositional bias: low complexity. The segment at residues 265-340 (DKMCAVCNDR…VGMVKEIVRH (76 aa)) is a DNA-binding region (nuclear receptor). 2 consecutive NR C4-type zinc fingers follow at residues 268-288 (CAVCNDRAVCLHYGARTCEGC) and 304-328 (CAGNKTCPIDKRYRSRCQYCRYQKC). The disordered stretch occupies residues 345-365 (GRRGRLSSKTKLARSEDQPSP). Positions 346 to 356 (RRGRLSSKTKL) are enriched in basic residues. Residues 365–600 (PPLPLLALMG…STDAPPACGS (236 aa)) enclose the NR LBD domain. Residues 589 to 600 (LRSTDAPPACGS) form an AF-2 region.

The protein belongs to the nuclear hormone receptor family. NR4 subfamily. As to expression, in hermaphrodites, expressed in the developing spermatheca and dorsal uterus. Expression includes the 8 cells of the dorsal somatic gonad primordium and the sujc cells that form the core of the spermatheca-uterine valve. Expressed in the precursor cells of the spermatheca-sheath lineages (SS cells) and in the precursors and descendents of the dorsal-uterine lineage (DU cells). In both hermaphroditic and male animals, expressed in a pair of head chemosensory neurons.

It is found in the nucleus. Functionally, transcriptional activator that induces gene expression by binding to the NGFI-B response element (NBRE) 5'-AAAGGTCA-3'. Required for proper morphogenesis of the spermatheca and the spermatheca-uterine valve formation. Promotes cell proliferation and differentiation of the spermatheca precursor cells during spermatheca development in larval stage L4. Might play a role in promoting G1/S phase progression in the spermatheca precursor cell lineage. Also required for the differentiation of the spermatheca-uterine junction core (sujc) cells which are generating the spermatheca-uterine valve. This Caenorhabditis elegans protein is Nuclear hormone receptor family member nhr-6 (nhr-6).